Consider the following 317-residue polypeptide: Carbonic anhydrase 6 (317 aa).

An N-terminal signal peptide occupies residues 1 to 17; the sequence is MRALVSVVSLFFLGIQA. Positions 19 to 277 constitute an Alpha-carbonic anhydrase domain; that stretch reads SDWSYSGDDG…NNHRVVEANF (259 aa). C41 and C223 are disulfide-bonded. H84 (proton donor/acceptor) is an active-site residue. Residues H110, H112, and H137 each coordinate Zn(2+). 219–220 is a substrate binding site; it reads TT. Residue N255 is glycosylated (N-linked (GlcNAc...) asparagine).

Belongs to the alpha-carbonic anhydrase family. Requires Zn(2+) as cofactor. Major constituent of saliva.

Its subcellular location is the secreted. The enzyme catalyses hydrogencarbonate + H(+) = CO2 + H2O. In terms of biological role, reversible hydration of carbon dioxide. Its role in saliva is unknown. The chain is Carbonic anhydrase 6 (Ca6) from Mus musculus (Mouse).